The chain runs to 388 residues: MNLHEYQAKQLFARYGLPAPTGYACTTPREAEEAASKIGAGPWVVKCQVHAGGRGKAGGVKVVNSKEDIRAFAENWLGKRLVTYQTDASGQPVNQILVEAATDIDKELYLGAVVDRGTRRVVFMASTEGGVEIEKVAEETPHLIHKMALDPLTGPQPYQGRELAFKLGLTGKQVGQFTKIFMGLATLFLERDLALVEINPLVVTKQGDLVCLDGKLTADGNALFRQSDLREMRDPSQEDSREAHAAQWELNYVALEGNIGCMVNGAGLAMGTMDIVKLSGGQPANFLDVGGGATKERVTEAFKIILSDDAVKAVFVNIFGGIVRCDLIADGIIGAVAEVGVNVPVVVRLEGNNAELGARKLADSGLNIIAATSLSDAAQRVVAAAEGK.

One can recognise an ATP-grasp domain in the interval 9-244 (KQLFARYGLP…PSQEDSREAH (236 aa)). ATP-binding positions include Lys-46, 53-55 (GRG), Glu-99, Thr-102, and Glu-107. The Mg(2+) site is built by Asn-199 and Asp-213. Substrate contacts are provided by residues Asn-264 and 321–323 (GIV).

The protein belongs to the succinate/malate CoA ligase beta subunit family. In terms of assembly, heterotetramer of two alpha and two beta subunits. Mg(2+) is required as a cofactor.

The catalysed reaction is succinate + ATP + CoA = succinyl-CoA + ADP + phosphate. It catalyses the reaction GTP + succinate + CoA = succinyl-CoA + GDP + phosphate. It participates in carbohydrate metabolism; tricarboxylic acid cycle; succinate from succinyl-CoA (ligase route): step 1/1. Functionally, succinyl-CoA synthetase functions in the citric acid cycle (TCA), coupling the hydrolysis of succinyl-CoA to the synthesis of either ATP or GTP and thus represents the only step of substrate-level phosphorylation in the TCA. The beta subunit provides nucleotide specificity of the enzyme and binds the substrate succinate, while the binding sites for coenzyme A and phosphate are found in the alpha subunit. The chain is Succinate--CoA ligase [ADP-forming] subunit beta from Erwinia tasmaniensis (strain DSM 17950 / CFBP 7177 / CIP 109463 / NCPPB 4357 / Et1/99).